Consider the following 83-residue polypeptide: Toxin To15 (83 aa).

The signal sequence occupies residues 1-19 (MKGIILLISCLMLIEVVVG). Residues 21–82 (KEGYPLDSSG…IWNAKTNKCY (62 aa)) enclose the LCN-type CS-alpha/beta domain. 4 disulfides stabilise this stretch: C31-C81, C35-C57, C43-C62, and C47-C64.

Belongs to the long (4 C-C) scorpion toxin superfamily. Sodium channel inhibitor family. Beta subfamily. In terms of tissue distribution, expressed by the venom gland.

It is found in the secreted. Its function is as follows. Beta toxins bind voltage-independently at site-4 of sodium channels (Nav) and shift the voltage of activation toward more negative potentials thereby affecting sodium channel activation and promoting spontaneous and repetitive firing. This is Toxin To15 from Tityus obscurus (Amazonian scorpion).